A 212-amino-acid polypeptide reads, in one-letter code: 3,4-dihydroxy-2-butanone 4-phosphate synthase (212 aa).

D-ribulose 5-phosphate is bound by residues 37–38, D42, 150–154, and E174; these read RE and RRGHT. E38 is a Mg(2+) binding site. H153 is a Mg(2+) binding site.

Belongs to the DHBP synthase family. In terms of assembly, homodimer. Mg(2+) serves as cofactor. The cofactor is Mn(2+).

The catalysed reaction is D-ribulose 5-phosphate = (2S)-2-hydroxy-3-oxobutyl phosphate + formate + H(+). It functions in the pathway cofactor biosynthesis; riboflavin biosynthesis; 2-hydroxy-3-oxobutyl phosphate from D-ribulose 5-phosphate: step 1/1. Catalyzes the conversion of D-ribulose 5-phosphate to formate and 3,4-dihydroxy-2-butanone 4-phosphate. In Histophilus somni (strain 129Pt) (Haemophilus somnus), this protein is 3,4-dihydroxy-2-butanone 4-phosphate synthase.